An 855-amino-acid chain; its full sequence is DNA mismatch repair protein MutS (855 aa).

616–623 provides a ligand contact to ATP; that stretch reads GPNMGGKS.

Belongs to the DNA mismatch repair MutS family.

In terms of biological role, this protein is involved in the repair of mismatches in DNA. It is possible that it carries out the mismatch recognition step. This protein has a weak ATPase activity. This is DNA mismatch repair protein MutS from Salmonella paratyphi A (strain ATCC 9150 / SARB42).